Reading from the N-terminus, the 78-residue chain is Acyl carrier protein (78 aa).

The Carrier domain maps to Ser-2–Lys-77. Ser-37 carries the post-translational modification O-(pantetheine 4'-phosphoryl)serine.

Belongs to the acyl carrier protein (ACP) family. 4'-phosphopantetheine is transferred from CoA to a specific serine of apo-ACP by AcpS. This modification is essential for activity because fatty acids are bound in thioester linkage to the sulfhydryl of the prosthetic group.

The protein resides in the cytoplasm. The protein operates within lipid metabolism; fatty acid biosynthesis. Its function is as follows. Carrier of the growing fatty acid chain in fatty acid biosynthesis. In Sphingopyxis alaskensis (strain DSM 13593 / LMG 18877 / RB2256) (Sphingomonas alaskensis), this protein is Acyl carrier protein.